The chain runs to 946 residues: DNA primase (946 aa).

Positions 596–626 are disordered; sequence RDTEEDEDGKENKNNVPDNGVFQKTTSSVDT. A compositionally biased stretch (polar residues) spans 617-626; sequence FQKTTSSVDT. A CHC2-type zinc finger spans residues 881–920; that stretch reads CLNYTHRNPQETVQVFIDLRTEHSYALWASLWSRCFTKKC.

It belongs to the herpesviridae DNA primase family. Associates with the helicase and the primase-associated factor to form the helicase-primase factor. Interacts with host SNAPIN.

Its subcellular location is the host nucleus. Functionally, essential component of the helicase/primase complex. Unwinds the DNA at the replication forks and generates single-stranded DNA for both leading and lagging strand synthesis. The primase initiates primer synthesis and thereby produces large amount of short RNA primers on the lagging strand that the polymerase elongates using dNTPs. This Homo sapiens (Human) protein is DNA primase (UL70).